Here is an 809-residue protein sequence, read N- to C-terminus: Sodium/hydrogen exchanger 2 (809 aa).

Transmembrane regions (helical) follow at residues 107-127 (IVPESCLLIMVGLLLGGIIFG), 138-158 (TDVFFLYLLPPIVLDAGYFMP), 169-189 (IFWYAVVGTLWNSIGIGVSLF), 209-229 (LFGSLISAVDPVAVLAVFENI), 237-257 (ILVFGESLLNDAVTVVLYNLF), 278-298 (FFVVGIGGVLIGIFLGFIAAF), and 308-328 (VIEPLFVFLYSYLSYITAEMF). Asparagine 350 is a glycosylation site (N-linked (GlcNAc...) asparagine). The next 4 helical transmembrane spans lie at 361–381 (YFMKMLSSVSETLIFIFMGVS), 392–412 (AFVCFTLAFCLIWRALGVFVL), 430–450 (FIIAYGGLRGAICFALVFLLP), and 459–479 (LFITAAIVVIFFTVFILGITI). Basic and acidic residues-rich tracts occupy residues 648 to 660 (IRKDNSLNRERRA) and 793 to 809 (RASEPGNRKSRLGSDKP). Disordered stretches follow at residues 648 to 700 (IRKD…EADA) and 734 to 809 (EVDA…SDKP).

This sequence belongs to the monovalent cation:proton antiporter 1 (CPA1) transporter (TC 2.A.36) family. As to quaternary structure, interacts with CHP1 and CHP2. As to expression, high levels in intestine and kidney. Strongly expressed in gastric epithelial cells, with particularly high expression levels in mucous cells.

The protein localises to the apical cell membrane. It carries out the reaction Na(+)(in) + H(+)(out) = Na(+)(out) + H(+)(in). Functionally, plasma membrane Na(+)/H(+) antiporter. Mediates the electroneutral exchange of intracellular H(+) ions for extracellular Na(+). Major apical Na(+)/H(+) exchanger in the base of the colonic crypt. Controls in the colonic crypt intracellular pH (pHi) to direct colonic epithelial cell differentiation into the absorptive enterocyte lineage at the expense of the secretory lineage. The protein is Sodium/hydrogen exchanger 2 (SLC9A2) of Oryctolagus cuniculus (Rabbit).